The primary structure comprises 188 residues: HTH-type transcriptional repressor AcnR (188 aa).

One can recognise an HTH tetR-type domain in the interval 10–70 (VNSRQEILEG…ALAREDAARM (61 aa)). Residues 33-52 (TVRRLEEATGKSRGAIFHHF) constitute a DNA-binding region (H-T-H motif). Citrate contacts are provided by residues 79–80 (LV), arginine 130, and asparagine 134. Glutamate 181 serves as a coordination point for Mg(2+). Residue arginine 185 coordinates citrate.

Homodimer.

Its function is as follows. AcnR negatively controls the expression of the aconitase gene acn. The polypeptide is HTH-type transcriptional repressor AcnR (Corynebacterium efficiens (strain DSM 44549 / YS-314 / AJ 12310 / JCM 11189 / NBRC 100395)).